We begin with the raw amino-acid sequence, 301 residues long: Tail tube protein (301 aa).

It belongs to the skunalikevirus tail tube protein family. As to quaternary structure, homohexamer. The tube is composed of 31 hexameric rings.

It localises to the virion. Its function is as follows. Forms the cylindrical rigid tail tube. This chain is Tail tube protein, found in Lactococcus phage F4-1 (Lactococcus lactis bacteriophage F4-1).